Consider the following 37-residue polypeptide: Gene 40 protein (37 aa).

The protein is Gene 40 protein (40) of Mycobacterium phage L5 (Mycobacteriophage L5).